We begin with the raw amino-acid sequence, 557 residues long: Ribonuclease J 2 (557 aa).

His-76, His-78, His-144, and Glu-166 together coordinate Zn(2+). Position 366 to 370 (366 to 370 (HASSH)) interacts with substrate.

Belongs to the metallo-beta-lactamase superfamily. RNA-metabolizing metallo-beta-lactamase-like family. Bacterial RNase J subfamily. Homodimer, may be a subunit of the RNA degradosome. Requires Zn(2+) as cofactor.

It localises to the cytoplasm. Functionally, an RNase that has 5'-3' exonuclease and possibly endoonuclease activity. Involved in maturation of rRNA and in some organisms also mRNA maturation and/or decay. This is Ribonuclease J 2 from Staphylococcus saprophyticus subsp. saprophyticus (strain ATCC 15305 / DSM 20229 / NCIMB 8711 / NCTC 7292 / S-41).